Consider the following 225-residue polypeptide: Membrane protein (225 aa).

Over 1–20 the chain is Virion surface; that stretch reads MSNETNCTLDFEQSVELFKE. Residues 21 to 41 traverse the membrane as a helical segment; sequence YNLFITAFLLFLTIILQYGYA. Over 42-51 the chain is Intravirion; sequence TRSKFIYILK. A helical membrane pass occupies residues 52-72; the sequence is MIVLWCFWPLNIAVGVISCIY. Residues 73–77 are Virion surface-facing; the sequence is PPNTG. Residues 78–98 form a helical membrane-spanning segment; the sequence is GLVAAIILTVFACLSFVGYWI. Residues 99-225 are Intravirion-facing; it reads QSIRLFKRCR…VATGGSSLYT (127 aa).

Belongs to the gammacoronaviruses M protein family. In terms of assembly, homomultimer. Interacts with envelope E protein in the budding compartment of the host cell, which is located between endoplasmic reticulum and the Golgi complex. Forms a complex with HE and S proteins. Interacts with nucleocapsid N protein. This interaction probably participates in RNA packaging into the virus.

The protein localises to the virion membrane. It localises to the host Golgi apparatus membrane. Functionally, component of the viral envelope that plays a central role in virus morphogenesis and assembly via its interactions with other viral proteins. In Gallus gallus (Chicken), this protein is Membrane protein.